The sequence spans 369 residues: MAKFELYAEVDVSISGHQYPIIICRNGLIDPDLINRFITSKQVLIVTNRTVAPLYLGHLQSVLPSKQCDVVILEDGEEHKNQRSLFTIYDSLIQNKHHRDTSIIALGGGVIGDMAGFAASTYQRGVRFIQLPTTLLAQVDASVGGKTAINHPAGKNMIGSFYQPQAVIIDLNTLKTLPEREFRAGIAEMIKYALLVGGSFFERIQEVLQQGLTVHSPELPLLIAECCQVKAKIVEQDERESGLRALLNLGHTFAHALETYTDYKKWLHGEAVAIGLYCAAVLSEKKGLLDKPIVDQVEKMLIHAGLPHKIPNSIDLIQLRELMSLDKKIKNNCLRFVMIKKPGACYIDDSVTEDCLHNTLINVVEGEQK.

NAD(+) contacts are provided by residues 75 to 80 (DGEEHK), 109 to 113 (GVIGD), 133 to 134 (TT), Lys-146, Lys-155, and 173 to 176 (TLKT). Positions 188, 251, and 268 each coordinate Zn(2+).

Belongs to the sugar phosphate cyclases superfamily. Dehydroquinate synthase family. Co(2+) is required as a cofactor. It depends on Zn(2+) as a cofactor. NAD(+) serves as cofactor.

Its subcellular location is the cytoplasm. It carries out the reaction 7-phospho-2-dehydro-3-deoxy-D-arabino-heptonate = 3-dehydroquinate + phosphate. It functions in the pathway metabolic intermediate biosynthesis; chorismate biosynthesis; chorismate from D-erythrose 4-phosphate and phosphoenolpyruvate: step 2/7. In terms of biological role, catalyzes the conversion of 3-deoxy-D-arabino-heptulosonate 7-phosphate (DAHP) to dehydroquinate (DHQ). This Legionella pneumophila (strain Paris) protein is 3-dehydroquinate synthase.